A 404-amino-acid chain; its full sequence is tRNA/tmRNA (uracil-C(5))-methyltransferase (404 aa).

Positions 218, 251, 256, 272, and 332 each coordinate S-adenosyl-L-methionine. Cys-358 serves as the catalytic Nucleophile. The Proton acceptor role is filled by Glu-392.

This sequence belongs to the class I-like SAM-binding methyltransferase superfamily. RNA M5U methyltransferase family. TrmA subfamily.

The catalysed reaction is uridine(54) in tRNA + S-adenosyl-L-methionine = 5-methyluridine(54) in tRNA + S-adenosyl-L-homocysteine + H(+). It catalyses the reaction uridine(341) in tmRNA + S-adenosyl-L-methionine = 5-methyluridine(341) in tmRNA + S-adenosyl-L-homocysteine + H(+). In terms of biological role, dual-specificity methyltransferase that catalyzes the formation of 5-methyluridine at position 54 (m5U54) in all tRNAs, and that of position 341 (m5U341) in tmRNA (transfer-mRNA). This chain is tRNA/tmRNA (uracil-C(5))-methyltransferase, found in Helicobacter hepaticus (strain ATCC 51449 / 3B1).